A 96-amino-acid polypeptide reads, in one-letter code: Co-chaperonin GroES (96 aa).

It belongs to the GroES chaperonin family. As to quaternary structure, heptamer of 7 subunits arranged in a ring. Interacts with the chaperonin GroEL.

The protein localises to the cytoplasm. In terms of biological role, together with the chaperonin GroEL, plays an essential role in assisting protein folding. The GroEL-GroES system forms a nano-cage that allows encapsulation of the non-native substrate proteins and provides a physical environment optimized to promote and accelerate protein folding. GroES binds to the apical surface of the GroEL ring, thereby capping the opening of the GroEL channel. In Neisseria meningitidis serogroup A / serotype 4A (strain DSM 15465 / Z2491), this protein is Co-chaperonin GroES.